A 354-amino-acid chain; its full sequence is Methylthioribose-1-phosphate isomerase (354 aa).

Asp-246 serves as the catalytic Proton donor.

Belongs to the eIF-2B alpha/beta/delta subunits family. MtnA subfamily.

The protein localises to the cytoplasm. It localises to the nucleus. It catalyses the reaction 5-(methylsulfanyl)-alpha-D-ribose 1-phosphate = 5-(methylsulfanyl)-D-ribulose 1-phosphate. The protein operates within amino-acid biosynthesis; L-methionine biosynthesis via salvage pathway; L-methionine from S-methyl-5-thio-alpha-D-ribose 1-phosphate: step 1/6. Its function is as follows. Catalyzes the interconversion of methylthioribose-1-phosphate (MTR-1-P) into methylthioribulose-1-phosphate (MTRu-1-P). The chain is Methylthioribose-1-phosphate isomerase (mri1) from Xenopus tropicalis (Western clawed frog).